Reading from the N-terminus, the 488-residue chain is 3-octaprenyl-4-hydroxybenzoate carboxy-lyase (488 aa).

N172 is a binding site for Mn(2+). Residues 175 to 177 (IYR), 189 to 191 (RWL), and 194 to 195 (RG) each bind prenylated FMN. E238 is a Mn(2+) binding site. The active-site Proton donor is D287.

Belongs to the UbiD family. In terms of assembly, homohexamer. Requires prenylated FMN as cofactor. Mn(2+) is required as a cofactor.

It localises to the cell membrane. It carries out the reaction a 4-hydroxy-3-(all-trans-polyprenyl)benzoate + H(+) = a 2-(all-trans-polyprenyl)phenol + CO2. Its pathway is cofactor biosynthesis; ubiquinone biosynthesis. In terms of biological role, catalyzes the decarboxylation of 3-octaprenyl-4-hydroxy benzoate to 2-octaprenylphenol, an intermediate step in ubiquinone biosynthesis. The polypeptide is 3-octaprenyl-4-hydroxybenzoate carboxy-lyase (Alkalilimnicola ehrlichii (strain ATCC BAA-1101 / DSM 17681 / MLHE-1)).